Reading from the N-terminus, the 515-residue chain is 2-isopropylmalate synthase (515 aa).

The 263-residue stretch at 5–267 (VIIFDTTLRD…HTSLKNDEIH (263 aa)) folds into the Pyruvate carboxyltransferase domain. Mn(2+) contacts are provided by D14, H202, H204, and N238. The tract at residues 392 to 515 (KLNYLSVQSG…EIKQNKITTV (124 aa)) is regulatory domain.

It belongs to the alpha-IPM synthase/homocitrate synthase family. LeuA type 1 subfamily. In terms of assembly, homodimer. Requires Mn(2+) as cofactor.

It localises to the cytoplasm. The enzyme catalyses 3-methyl-2-oxobutanoate + acetyl-CoA + H2O = (2S)-2-isopropylmalate + CoA + H(+). Its pathway is amino-acid biosynthesis; L-leucine biosynthesis; L-leucine from 3-methyl-2-oxobutanoate: step 1/4. Functionally, catalyzes the condensation of the acetyl group of acetyl-CoA with 3-methyl-2-oxobutanoate (2-ketoisovalerate) to form 3-carboxy-3-hydroxy-4-methylpentanoate (2-isopropylmalate). This Aliivibrio salmonicida (strain LFI1238) (Vibrio salmonicida (strain LFI1238)) protein is 2-isopropylmalate synthase.